A 249-amino-acid chain; its full sequence is Probable transcriptional regulatory protein Sfum_0996 (249 aa).

Belongs to the TACO1 family.

The protein resides in the cytoplasm. The sequence is that of Probable transcriptional regulatory protein Sfum_0996 from Syntrophobacter fumaroxidans (strain DSM 10017 / MPOB).